A 373-amino-acid chain; its full sequence is 3 beta-hydroxysteroid dehydrogenase/Delta 5--&gt;4-isomerase type 1 (373 aa).

Residues 10 to 15 (GAGGFL), Y155, and K159 contribute to the NADP(+) site. The active-site Proton donor is K159. Residues 288–308 (VALLYWLGFLLELVSFLLRPV) traverse the membrane as a helical segment.

It belongs to the 3-beta-HSD family. As to expression, high levels in adrenal gland, kidney and male liver. Low levels in female liver.

The protein localises to the endoplasmic reticulum membrane. It localises to the mitochondrion membrane. The catalysed reaction is a 3beta-hydroxy-Delta(5)-steroid + NAD(+) = a 3-oxo-Delta(5)-steroid + NADH + H(+). It catalyses the reaction pregnenolone + NAD(+) = pregn-5-ene-3,20-dione + NADH + H(+). It carries out the reaction 3beta-hydroxyandrost-5-en-17-one + NAD(+) = androst-5-ene-3,17-dione + NADH + H(+). The enzyme catalyses androst-5-en-3beta,17beta-diol + NAD(+) = 17beta-hydroxy-androst-5-en-3-one + NADH + H(+). The catalysed reaction is a 3beta-hydroxysteroid + NADP(+) = a 3-oxosteroid + NADPH + H(+). It catalyses the reaction 5alpha-androstane-3beta,17beta-diol + NADP(+) = 17beta-hydroxy-5alpha-androstan-3-one + NADPH + H(+). It carries out the reaction 3beta-hydroxy-5alpha-androstan-17-one + NADP(+) = 5alpha-androstan-3,17-dione + NADPH + H(+). The enzyme catalyses a 3-oxo-Delta(5)-steroid = a 3-oxo-Delta(4)-steroid. The catalysed reaction is pregn-5-ene-3,20-dione = progesterone. It catalyses the reaction androst-5-ene-3,17-dione = androst-4-ene-3,17-dione. It carries out the reaction 17beta-hydroxy-androst-5-en-3-one = testosterone. The enzyme catalyses 5alpha-androstane-3beta,17beta-diol + NAD(+) = 17beta-hydroxy-5alpha-androstan-3-one + NADH + H(+). It participates in steroid hormone biosynthesis. It functions in the pathway steroid metabolism. A bifunctional enzyme responsible for the oxidation and isomerization of 3beta-hydroxy-Delta(5)-steroid precursors to 3-oxo-Delta(4)-steroids, an essential step in steroid hormone biosynthesis. Specifically catalyzes the conversion of pregnenolone to progesterone, 17alpha-hydroxypregnenolone to 17alpha-hydroxyprogesterone, dehydroepiandrosterone (DHEA) to 4-androstenedione, and androstenediol to testosterone. Additionally, catalyzes the interconversion between 3beta-hydroxy and 3-oxo-5alpha-androstane steroids controlling the bioavalability of the active forms. Specifically converts dihydrotestosterone to its inactive form 5alpha-androstanediol, that does not bind androgen receptor/AR. Also converts androstanedione, a precursor of testosterone and estrone, to epiandrosterone. Expected to use NAD(+) as preferred electron donor for the 3-beta-hydroxy-steroid dehydrogenase activity and NADPH for the 3-ketosteroid reductase activity. This Mesocricetus auratus (Golden hamster) protein is 3 beta-hydroxysteroid dehydrogenase/Delta 5--&gt;4-isomerase type 1 (HSD3B1).